We begin with the raw amino-acid sequence, 426 residues long: Glutamyl-tRNA(Gln) amidotransferase subunit D (426 aa).

In terms of domain architecture, Asparaginase/glutaminase spans 82–413 (KNISILSTGG…KDAKKLICKN (332 aa)). Residues T92, T168, D169, and K245 contribute to the active site.

It belongs to the asparaginase 1 family. GatD subfamily. In terms of assembly, heterodimer of GatD and GatE.

The catalysed reaction is L-glutamyl-tRNA(Gln) + L-glutamine + ATP + H2O = L-glutaminyl-tRNA(Gln) + L-glutamate + ADP + phosphate + H(+). Allows the formation of correctly charged Gln-tRNA(Gln) through the transamidation of misacylated Glu-tRNA(Gln) in organisms which lack glutaminyl-tRNA synthetase. The reaction takes place in the presence of glutamine and ATP through an activated gamma-phospho-Glu-tRNA(Gln). The GatDE system is specific for glutamate and does not act on aspartate. This Methanococcus vannielii (strain ATCC 35089 / DSM 1224 / JCM 13029 / OCM 148 / SB) protein is Glutamyl-tRNA(Gln) amidotransferase subunit D.